Consider the following 274-residue polypeptide: Merozoite surface protein 2 (274 aa).

A signal peptide spans 1 to 20; that stretch reads MKVIKTLSIINFFIFVTFNI. 2 N-linked (GlcNAc...) asparagine glycosylation sites follow: asparagine 22 and asparagine 36. Residues 43–234 are disordered; that stretch reads MAESKPPTGT…SDSQKECTDG (192 aa). The polymorphic region stretch occupies residues 44–200; that stretch reads AESKPPTGTG…EQTESPELQS (157 aa). Repeat copies occupy residues 53-62 and 63-72. Residues 53–72 are 2 X 10 AA tandem repeats of G-A-S-G-S-A-G-S-G-[AD]; the sequence is GASGSAGSGAGASGSAGSGD. The segment covering 53–72 has biased composition (gly residues); it reads GASGSAGSGAGASGSAGSGD. The span at 91–121 shows a compositional bias: low complexity; that stretch reads SSSTPATTTTTTTTTTTTTTNDAEASTSTSS. Polar residues-rich tracts occupy residues 122–131, 140–167, and 174–202; these read ENPNHNNAET, QKSNQANKETQNNSNVQQDSQTKSNVPP, and KSPTAQPEQAENSAPTAEQTESPELQSAP. N-linked (GlcNAc...) asparagine glycosylation is present at asparagine 151. The N-linked (GlcNAc...) asparagine glycan is linked to asparagine 223. An intrachain disulfide couples cysteine 231 to cysteine 239. N-linked (GlcNAc...) asparagine glycosylation is present at asparagine 248. Asparagine 248 is lipidated: GPI-anchor amidated asparagine. A propeptide spans 249-274 (removed in mature form); the sequence is SSNIASINKFVVLISAKLVLSFAIFI.

It localises to the cell membrane. Its function is as follows. May play a role in the merozoite attachment to the erythrocyte. In Plasmodium falciparum (isolate kf1916), this protein is Merozoite surface protein 2.